Reading from the N-terminus, the 196-residue chain is Hibernation-associated plasma protein HP-20 (196 aa).

The N-terminal stretch at 1–23 is a signal peptide; that stretch reads MTDVWRLAIFVLMVNVLNDQVSC. One can recognise a Collagen-like domain in the interval 25 to 63; it reads GPPGPVGYPGVPGVPGPRGPPGQPGAAGRPGDPGPKGPS. Pro residues predominate over residues 28–47; that stretch reads GPVGYPGVPGVPGPRGPPGQ. The tract at residues 28–64 is disordered; that stretch reads GPVGYPGVPGVPGPRGPPGQPGAAGRPGDPGPKGPSV. The C1q domain occupies 67 to 196; sequence PCRERSAFTV…IYFSGFLISS (130 aa).

Plasma; synthesized in the liver.

It localises to the secreted. Functionally, plasma proteins HP-20, HP-25, HP-27 and HP-55 form a 140 kDa complex via disulfide bonds in the plasma and are hibernation specific. This is Hibernation-associated plasma protein HP-20 from Tamias sibiricus (Siberian chipmunk).